Consider the following 405-residue polypeptide: Argininosuccinate synthase (405 aa).

ATP contacts are provided by residues 10 to 18 and alanine 37; that span reads AYSGGLDTS. The L-citrulline site is built by tyrosine 88 and serine 93. Glycine 118 serves as a coordination point for ATP. 3 residues coordinate L-aspartate: threonine 120, asparagine 124, and aspartate 125. Asparagine 124 is an L-citrulline binding site. Residues arginine 128, serine 179, serine 188, glutamate 264, and tyrosine 276 each contribute to the L-citrulline site.

The protein belongs to the argininosuccinate synthase family. Type 1 subfamily. In terms of assembly, homotetramer.

Its subcellular location is the cytoplasm. It carries out the reaction L-citrulline + L-aspartate + ATP = 2-(N(omega)-L-arginino)succinate + AMP + diphosphate + H(+). Its pathway is amino-acid biosynthesis; L-arginine biosynthesis; L-arginine from L-ornithine and carbamoyl phosphate: step 2/3. This chain is Argininosuccinate synthase, found in Pseudomonas savastanoi pv. phaseolicola (strain 1448A / Race 6) (Pseudomonas syringae pv. phaseolicola (strain 1448A / Race 6)).